Reading from the N-terminus, the 782-residue chain is Lysosome membrane protein 2-C (782 aa).

Over 1 to 7 (MVANNKG) the chain is Cytoplasmic. The chain crosses the membrane as a helical span at residues 8–28 (LLIAGLLLSVIGAALFVISLA). The Lumenal portion of the chain corresponds to 29-739 (LLPSVLNVAT…QQFKQIQTVK (711 aa)). 22 N-linked (GlcNAc...) asparagine glycosylation sites follow: Asn77, Asn105, Asn191, Asn219, Asn234, Asn243, Asn281, Asn368, Asn387, Asn401, Asn427, Asn432, Asn451, Asn465, Asn501, Asn536, Asn540, Asn595, Asn605, Asn613, Asn646, and Asn692. The helical transmembrane segment at 740–760 (IAPVVVVSIFGGILLIAGLVM) threads the bilayer. The Cytoplasmic portion of the chain corresponds to 761 to 782 (AINGFRKTFYNNNQYNGYNIIN). The short motif at 777–781 (GYNII) is the Tyrosine-type lysosomal sorting signal element.

Belongs to the CD36 family. In terms of processing, heavily glycosylated.

The protein resides in the lysosome membrane. In terms of biological role, may act as a lysosomal receptor. May be involved role in macropinocytosis and fluid phase exocytosis. The chain is Lysosome membrane protein 2-C (lmpC) from Dictyostelium discoideum (Social amoeba).